The primary structure comprises 428 residues: Glucose-1-phosphate adenylyltransferase (428 aa).

Residues tyrosine 99, glycine 164, 179–180 (EK), and serine 190 contribute to the alpha-D-glucose 1-phosphate site.

The protein belongs to the bacterial/plant glucose-1-phosphate adenylyltransferase family. Homotetramer.

It catalyses the reaction alpha-D-glucose 1-phosphate + ATP + H(+) = ADP-alpha-D-glucose + diphosphate. It functions in the pathway glycan biosynthesis; glycogen biosynthesis. Its function is as follows. Involved in the biosynthesis of ADP-glucose, a building block required for the elongation reactions to produce glycogen. Catalyzes the reaction between ATP and alpha-D-glucose 1-phosphate (G1P) to produce pyrophosphate and ADP-Glc. The chain is Glucose-1-phosphate adenylyltransferase from Thermomicrobium roseum (strain ATCC 27502 / DSM 5159 / P-2).